Consider the following 469-residue polypeptide: Ubiquitin carboxyl-terminal hydrolase MINDY-1 (469 aa).

Residues 1 to 85 are disordered; sequence MEHHQPEDPA…APPGPTLGTL (85 aa). Residues 34-53 show a composition bias toward basic and acidic residues; the sequence is HPQDTDARDADGEAGEREPA. Serine 103 is modified (phosphoserine). The active-site Nucleophile is the cysteine 137. The active-site Proton acceptor is the histidine 319. Residues 388 to 426 form a ubiquitin-binding domain (UBD) region; that stretch reads QVDQDYLIALSLQQQQPRGTLGLTDLELAQQLQQEEYQQ. Residues 428 to 469 form a disordered region; sequence QAAQPVWMRTRALSPQGRGATSGRPAGERRQRPKHESDCILL. Residue serine 441 is modified to Phosphoserine. Residues 453–469 show a composition bias toward basic and acidic residues; the sequence is AGERRQRPKHESDCILL.

This sequence belongs to the MINDY deubiquitinase family. FAM63 subfamily.

It carries out the reaction Thiol-dependent hydrolysis of ester, thioester, amide, peptide and isopeptide bonds formed by the C-terminal Gly of ubiquitin (a 76-residue protein attached to proteins as an intracellular targeting signal).. Its function is as follows. Hydrolase that can specifically remove 'Lys-48'-linked conjugated ubiquitin from proteins. Has exodeubiquitinase activity and has a preference for long polyubiquitin chains. May play a regulatory role at the level of protein turnover. This chain is Ubiquitin carboxyl-terminal hydrolase MINDY-1 (MINDY1), found in Pongo abelii (Sumatran orangutan).